We begin with the raw amino-acid sequence, 104 residues long: Integration host factor subunit beta (104 aa).

Belongs to the bacterial histone-like protein family. As to quaternary structure, heterodimer of an alpha and a beta chain.

In terms of biological role, this protein is one of the two subunits of integration host factor, a specific DNA-binding protein that functions in genetic recombination as well as in transcriptional and translational control. This is Integration host factor subunit beta from Xylella fastidiosa (strain M23).